Consider the following 472-residue polypeptide: MPQNRSVESQAYSLPLILPDLRREEAIHQITDTLQHLQTVSNDIFSRILQRVETNRDQLQRINGRLSLAQAKIERLKGSKKAIKVFSSAKYPAPDRLQEYSSIFAGAKDGWSAKKQRHKIQSKHRPLDEQAVQEKLKYFPVCVNTRGQDEESAEEGLGSLPRNINSVSSLLLFNTTENLYKKYVLLDPLAGVVTRTNPALEGEDEEKLFDAPLSITKREQLERQTAENYFYVPDLGQVPEIDVPYSLPDLLGVADDLMYSADLGPGIAPSAPGVPIPELPTFTTEDITENSITDRQDGRLLPPPPPPPPPPPPPPPPEPSALSPPAPPPPPLSIPAPAKKGGSDPGDQGAVQGAPKEVVNPSNGRASLLESIRQAGGIGKANLRNVKEKKLEKKKMKEQEQVGATGGGGDLMSDLFNKLAMRRKGISGKVPAAGEASGDGPTGAFARISDTIPPLPPPHQASGDGDEDDWES.

Residues 1–51 are required for WASH complex assembly; it reads MPQNRSVESQAYSLPLILPDLRREEAIHQITDTLQHLQTVSNDIFSRILQR. Disordered regions lie at residues 294–411 and 429–472; these read DRQD…GGDL and KVPA…DWES. The segment covering 301 to 334 has biased composition (pro residues); that stretch reads LPPPPPPPPPPPPPPPPEPSALSPPAPPPPPLSI. The VCA stretch occupies residues 352-472; it reads QGAPKEVVNP…GDGDEDDWES (121 aa). Residues 364-386 form the WH2 domain; it reads GRASLLESIRQAGGIGKANLRNV. A compositionally biased stretch (basic and acidic residues) spans 385-400; it reads NVKEKKLEKKKMKEQE.

This sequence belongs to the WASH1 family. As to quaternary structure, component of the WASH complex.

It is found in the early endosome membrane. It localises to the recycling endosome membrane. Acts as a nucleation-promoting factor at the surface of endosomes, where it recruits and activates the Arp2/3 complex to induce actin polymerization, playing a key role in the fission of tubules that serve as transport intermediates during endosome sorting. The chain is WASH complex subunit 1 from Xenopus laevis (African clawed frog).